An 84-amino-acid chain; its full sequence is Large ribosomal subunit protein bL31B (84 aa).

This sequence belongs to the bacterial ribosomal protein bL31 family. Type B subfamily. Part of the 50S ribosomal subunit.

The protein is Large ribosomal subunit protein bL31B of Photorhabdus laumondii subsp. laumondii (strain DSM 15139 / CIP 105565 / TT01) (Photorhabdus luminescens subsp. laumondii).